Reading from the N-terminus, the 889-residue chain is Voltage-gated potassium channel KCNC3 (889 aa).

The segment at 1–80 (MLSSVCVWSF…CSGLPAVAMG (80 aa)) is important for normal N-type inactivation. At 1 to 291 (MLSSVCVWSF…EDPYSSRAAR (291 aa)) the chain is on the cytoplasmic side. The interval 10 to 66 (FSGRQGTRKQHSQPAPTPQPPESSPPPLLPPPQQQCAQPGTAASPAGAPLSCGPGGR) is disordered. The span at 24–42 (APTPQPPESSPPPLLPPPQ) shows a compositional bias: pro residues. Histidine 159, cysteine 165, cysteine 186, and cysteine 187 together coordinate Zn(2+). The tract at residues 202-231 (DSFEAPDSSGNANANAGGAHDAGLDDEAGA) is disordered. Positions 211–222 (GNANANAGGAHD) are enriched in low complexity. The chain crosses the membrane as a helical span at residues 292 to 310 (YVAFASLFFILISITTFCL). Residue asparagine 321 is glycosylated (N-linked (GlcNAc...) asparagine). The chain crosses the membrane as a helical span at residues 352-371 (VEGVCVVWFTFEFLMRVTFC). The Cytoplasmic portion of the chain corresponds to 372-380 (PDKVEFLKS). The helical transmembrane segment at 381-399 (SLNIIDCVAILPFYLEVGL) threads the bilayer. A helical; Voltage-sensor transmembrane segment spans residues 413–435 (FLRVVRFVRILRIFKLTRHFVGL). The Cytoplasmic segment spans residues 436-448 (RVLGHTLRASTNE). A helical membrane pass occupies residues 449-470 (FLLLIIFLALGVLIFATMIYYA). 4 residues coordinate K(+): threonine 504, leucine 505, glycine 506, and tyrosine 507. The Selectivity filter signature appears at 504 to 509 (TLGYGD). Residues 519 to 540 (LVGALCALAGVLTIAMPVPVIV) traverse the membrane as a helical segment. Residues 541-889 (NNFGMYYSLA…FPSRHSSPAV (349 aa)) lie on the Cytoplasmic side of the membrane. Disordered regions lie at residues 557–627 (PKKK…LLRG), 691–834 (IDQP…PQSL), and 852–889 (TLGF…SPAV). At arginine 626 the chain carries Omega-N-methylarginine. 2 positions are modified to phosphoserine: serine 697 and serine 702. Residues 748–764 (SQAPPASCPTSTPTQQP) show a composition bias toward low complexity. Threonine 759 carries the phosphothreonine modification. The segment covering 794 to 808 (HRSHQPPGKHQRGGR) has biased composition (basic residues).

The protein belongs to the potassium channel family. C (Shaw) (TC 1.A.1.2) subfamily. Kv3.3/KCNC3 sub-subfamily. Homotetramer. Heterotetramer with KCNC1. Interacts (via C-terminus) with HAX1; this interaction modulates channel gating. Identified in a complex with ACTR3, a subunit of the Arp2/3 complex; this interaction is indirect and depends on the presence of HAX1. N-glycosylated. As to expression, detected on Purkinje cells in the cerebellum molecular layer (at protein level).

It is found in the cell membrane. The protein localises to the presynaptic cell membrane. It localises to the perikaryon. The protein resides in the cell projection. Its subcellular location is the axon. It is found in the dendrite. The protein localises to the dendritic spine membrane. It localises to the cytoplasm. The protein resides in the cell cortex. Its subcellular location is the cytoskeleton. The catalysed reaction is K(+)(in) = K(+)(out). Its function is as follows. Voltage-gated potassium channel that plays an important role in the rapid repolarization of fast-firing brain neurons. The channel opens in response to the voltage difference across the membrane, forming a potassium-selective channel through which potassium ions pass in accordance with their electrochemical gradient. The channel displays rapid activation and inactivation kinetics. It plays a role in the regulation of the frequency, shape and duration of action potentials in Purkinje cells. Required for normal survival of cerebellar neurons, probably via its role in regulating the duration and frequency of action potentials that in turn regulate the activity of voltage-gated Ca(2+) channels and cellular Ca(2+) homeostasis. Required for normal motor function. Plays a role in the reorganization of the cortical actin cytoskeleton and the formation of actin veil structures in neuronal growth cones via its interaction with HAX1 and the Arp2/3 complex. This chain is Voltage-gated potassium channel KCNC3, found in Rattus norvegicus (Rat).